We begin with the raw amino-acid sequence, 288 residues long: Syntaxin PEP12 (288 aa).

Residues 1–268 (MSEDEFFGGD…RYQKRTSRWR (268 aa)) lie on the Cytoplasmic side of the membrane. 2 positions are modified to phosphoserine: Ser2 and Ser23. In terms of domain architecture, t-SNARE coiled-coil homology spans 195–257 (QNLIEQRDQE…QLASDELRKA (63 aa)). Residues 269–288 (VYLLIVLLVMLLFIFLIMKL) traverse the membrane as a helical; Anchor for type IV membrane protein segment.

The protein belongs to the syntaxin family. In terms of processing, ubiquitinated.

Its subcellular location is the membrane. Its function is as follows. Plays a role in the sorting and targeting of vacuolar proteases. This is Syntaxin PEP12 (PEP12) from Saccharomyces cerevisiae (strain ATCC 204508 / S288c) (Baker's yeast).